Here is a 103-residue protein sequence, read N- to C-terminus: Co-chaperonin GroES (103 aa).

Belongs to the GroES chaperonin family. As to quaternary structure, heptamer of 7 subunits arranged in a ring. Interacts with the chaperonin GroEL.

The protein resides in the cytoplasm. Functionally, together with the chaperonin GroEL, plays an essential role in assisting protein folding. The GroEL-GroES system forms a nano-cage that allows encapsulation of the non-native substrate proteins and provides a physical environment optimized to promote and accelerate protein folding. GroES binds to the apical surface of the GroEL ring, thereby capping the opening of the GroEL channel. This is Co-chaperonin GroES from Synechococcus sp. (strain CC9605).